The following is a 349-amino-acid chain: Flap endonuclease 1-B (349 aa).

Residues 1-105 (MGIKGLTKLL…GELAKRLARR (105 aa)) form an N-domain region. Asp34 provides a ligand contact to Mg(2+). DNA is bound at residue Arg71. The Mg(2+) site is built by Asp87, Glu159, Glu161, Asp180, and Asp182. Residues 123 to 254 (DMEKYSKRTV…QTALKLIRQH (132 aa)) are I-domain. Glu159 provides a ligand contact to DNA. DNA-binding residues include Gly232 and Asp234. Residue Asp234 participates in Mg(2+) binding.

Belongs to the XPG/RAD2 endonuclease family. FEN1 subfamily. As to quaternary structure, interacts with PCNA. Three molecules of FEN1 bind to one PCNA trimer with each molecule binding to one PCNA monomer. PCNA stimulates the nuclease activity without altering cleavage specificity. It depends on Mg(2+) as a cofactor. Post-translationally, phosphorylated. Phosphorylation upon DNA damage induces relocalization to the nuclear plasma.

It localises to the nucleus. The protein localises to the nucleolus. Its subcellular location is the nucleoplasm. It is found in the mitochondrion. Functionally, structure-specific nuclease with 5'-flap endonuclease and 5'-3' exonuclease activities involved in DNA replication and repair. During DNA replication, cleaves the 5'-overhanging flap structure that is generated by displacement synthesis when DNA polymerase encounters the 5'-end of a downstream Okazaki fragment. It enters the flap from the 5'-end and then tracks to cleave the flap base, leaving a nick for ligation. Also involved in the long patch base excision repair (LP-BER) pathway, by cleaving within the apurinic/apyrimidinic (AP) site-terminated flap. Acts as a genome stabilization factor that prevents flaps from equilibrating into structures that lead to duplications and deletions. Also possesses 5'-3' exonuclease activity on nicked or gapped double-stranded DNA, and exhibits RNase H activity. Also involved in replication and repair of rDNA and in repairing mitochondrial DNA. The sequence is that of Flap endonuclease 1-B from Physcomitrium patens (Spreading-leaved earth moss).